The primary structure comprises 101 residues: MAKKSMVAREKKREALVAKYAAKRAELKEIINNKELEMEERFRASLKLAKLPRNSSAVRLHNRCQLTGRPHAYYRKLKISRIALRDLGSSGQIPGMVKSSW.

This sequence belongs to the universal ribosomal protein uS14 family. Part of the 30S ribosomal subunit. Contacts proteins S3 and S10.

Functionally, binds 16S rRNA, required for the assembly of 30S particles and may also be responsible for determining the conformation of the 16S rRNA at the A site. This chain is Small ribosomal subunit protein uS14, found in Roseobacter denitrificans (strain ATCC 33942 / OCh 114) (Erythrobacter sp. (strain OCh 114)).